A 292-amino-acid polypeptide reads, in one-letter code: NAD kinase (292 aa).

Aspartate 73 functions as the Proton acceptor in the catalytic mechanism. NAD(+) is bound by residues 73–74, 147–148, histidine 158, arginine 175, aspartate 177, 188–193, and glutamine 247; these read DG, NE, and TAYSLS.

It belongs to the NAD kinase family. Requires a divalent metal cation as cofactor.

The protein resides in the cytoplasm. The catalysed reaction is NAD(+) + ATP = ADP + NADP(+) + H(+). Its function is as follows. Involved in the regulation of the intracellular balance of NAD and NADP, and is a key enzyme in the biosynthesis of NADP. Catalyzes specifically the phosphorylation on 2'-hydroxyl of the adenosine moiety of NAD to yield NADP. The polypeptide is NAD kinase (Salmonella dublin (strain CT_02021853)).